Consider the following 204-residue polypeptide: MAKNAMLCLLILSVVLALAFATNEKDDKEAGNLSTGIFGKAGRFVTVALAMSSRLGGAGASQGGGAVHGESLKSNQLQNAYRMALPPPMQIKSAEIDGWKPSPDEYLKKFAQEFRRNTGMKPQSYNEEKRVTPGGPDPLHNREKILEEQKRVTPGGPDPLHNREKTLEEQKRVTPGGPDPLHNREKTLEEQKRVTPGVPDRQHR.

The N-terminal stretch at 1 to 21 (MAKNAMLCLLILSVVLALAFA) is a signal peptide. Positions 21–83 (ATNEKDDKEA…SNQLQNAYRM (63 aa)) are required for secretion from the host cytoplasm to the host apoplasm. N32 carries an N-linked (GlcNAc...) asparagine glycan. A disordered region spans residues 116–204 (RNTGMKPQSY…TPGVPDRQHR (89 aa)). 3 stretches are compositionally biased toward basic and acidic residues: residues 139–151 (LHNR…EQKR), 160–172 (LHNR…EQKR), and 181–193 (LHNR…EQKR). 3 consecutive propeptides (removed in mature form) follow at residues 142-150 (REKILEEQK), 163-171 (REKTLEEQK), and 184-192 (REKTLEEQK).

It belongs to the CLV3/ESR signal peptide family. In terms of processing, preprocessing of the precursor by host proteases leads first to the production of 21-mer CLE-containing peptides (Arg-130 to Lys-150, Arg-151 to Lys-171 and Arg-172 to Lys-192) followed by an ultimate C-term trimming to give the mature 12-mer CLE1-1 peptide. Highly expressed exclusively within the dorsal esophageal gland cell during syncytium formation in host plants.

The protein resides in the secreted. Its subcellular location is the host cytoplasm. It localises to the host extracellular space. It is found in the extracellular space. The protein localises to the apoplast. In terms of biological role, mimics host plant CLE extracellular signal peptides that regulate cell fate. May play a role in the differentiation or division of feeding cells (syncytia) induced in plant roots during infection. This Globodera rostochiensis (Golden nematode worm) protein is CLAVATA3/ESR (CLE)-related protein 1.